The chain runs to 733 residues: Ribosomal protein S6 kinase 2 alpha (733 aa).

Residues 18 to 38 form a disordered region; it reads EDPENGHGSPEEGGRHTSKDE. In terms of domain architecture, Protein kinase 1 spans 62–321; sequence FVLLKVLGQG…AEEIKRQPFF (260 aa). ATP-binding positions include 68–76 and Lys-94; that span reads LGQGSFGKV. Asp-187 acts as the Proton acceptor in catalysis. Ser-221 is modified (phosphoserine). In terms of domain architecture, AGC-kinase C-terminal spans 322–391; sequence STIDWNKLFR…VAPALVEEDA (70 aa). The residue at position 359 (Thr-359) is a Phosphothreonine. A Phosphoserine modification is found at Ser-363. Ser-380 is modified (phosphoserine; by autocatalysis). Positions 416-673 constitute a Protein kinase 2 domain; the sequence is YTVRETIGVG…AKQVLQHEWI (258 aa). Residues 422 to 430 and Lys-445 contribute to the ATP site; that span reads IGVGSYSVC. Asp-533 serves as the catalytic Proton acceptor. Position 571 is a phosphothreonine (Thr-571). Ser-730 is modified (phosphoserine).

The protein belongs to the protein kinase superfamily. AGC Ser/Thr protein kinase family. S6 kinase subfamily. Requires Mg(2+) as cofactor. In terms of processing, autophosphorylated on Ser-380, as part of the activation process.

The catalysed reaction is L-seryl-[protein] + ATP = O-phospho-L-seryl-[protein] + ADP + H(+). It carries out the reaction L-threonyl-[protein] + ATP = O-phospho-L-threonyl-[protein] + ADP + H(+). Activated by multiple phosphorylations on threonine and serine residues. Its function is as follows. Serine/threonine kinase that may play a role in mediating the growth-factor and stress induced activation of transcription. This chain is Ribosomal protein S6 kinase 2 alpha (rps6ka), found in Xenopus laevis (African clawed frog).